The primary structure comprises 373 residues: Erythronate-4-phosphate dehydrogenase (373 aa).

S45 and T66 together coordinate substrate. Positions 146 and 173 each coordinate NAD(+). The active site involves R206. D230 contacts NAD(+). E235 is an active-site residue. Catalysis depends on H252, which acts as the Proton donor. G255 contacts NAD(+). Y256 lines the substrate pocket.

It belongs to the D-isomer specific 2-hydroxyacid dehydrogenase family. PdxB subfamily. As to quaternary structure, homodimer.

It is found in the cytoplasm. It carries out the reaction 4-phospho-D-erythronate + NAD(+) = (R)-3-hydroxy-2-oxo-4-phosphooxybutanoate + NADH + H(+). It participates in cofactor biosynthesis; pyridoxine 5'-phosphate biosynthesis; pyridoxine 5'-phosphate from D-erythrose 4-phosphate: step 2/5. Functionally, catalyzes the oxidation of erythronate-4-phosphate to 3-hydroxy-2-oxo-4-phosphonooxybutanoate. This Saccharophagus degradans (strain 2-40 / ATCC 43961 / DSM 17024) protein is Erythronate-4-phosphate dehydrogenase.